Reading from the N-terminus, the 250-residue chain is uncharacterized protein (250 aa).

This is an uncharacterized protein from Mycobacterium tuberculosis (strain CDC 1551 / Oshkosh).